We begin with the raw amino-acid sequence, 559 residues long: Dihydroxy-acid dehydratase (559 aa).

[2Fe-2S] cluster is bound at residue Cys-49. Asp-81 is a binding site for Mg(2+). Cys-122 is a binding site for [2Fe-2S] cluster. Mg(2+) is bound by residues Asp-123 and Lys-124. Lys-124 is subject to N6-carboxylysine. Cys-194 lines the [2Fe-2S] cluster pocket. Residue Glu-446 participates in Mg(2+) binding. The active-site Proton acceptor is the Ser-472.

The protein belongs to the IlvD/Edd family. In terms of assembly, homodimer. It depends on [2Fe-2S] cluster as a cofactor. Requires Mg(2+) as cofactor.

The enzyme catalyses (2R)-2,3-dihydroxy-3-methylbutanoate = 3-methyl-2-oxobutanoate + H2O. It catalyses the reaction (2R,3R)-2,3-dihydroxy-3-methylpentanoate = (S)-3-methyl-2-oxopentanoate + H2O. Its pathway is amino-acid biosynthesis; L-isoleucine biosynthesis; L-isoleucine from 2-oxobutanoate: step 3/4. The protein operates within amino-acid biosynthesis; L-valine biosynthesis; L-valine from pyruvate: step 3/4. In terms of biological role, functions in the biosynthesis of branched-chain amino acids. Catalyzes the dehydration of (2R,3R)-2,3-dihydroxy-3-methylpentanoate (2,3-dihydroxy-3-methylvalerate) into 2-oxo-3-methylpentanoate (2-oxo-3-methylvalerate) and of (2R)-2,3-dihydroxy-3-methylbutanoate (2,3-dihydroxyisovalerate) into 2-oxo-3-methylbutanoate (2-oxoisovalerate), the penultimate precursor to L-isoleucine and L-valine, respectively. This is Dihydroxy-acid dehydratase from Prochlorococcus marinus (strain MIT 9515).